The chain runs to 983 residues: Inner tegument protein (983 aa).

The interaction with large tegument protein stretch occupies residues 474 to 983; it reads LNVNTHFAVQ…TSVSLPPASP (510 aa). The interval 901–932 is disordered; sequence APWESAPQPPRLRMTPDTDHEESTAGATSVPE. Residues 914 to 923 are compositionally biased toward basic and acidic residues; it reads MTPDTDHEES.

The protein belongs to the herpesviridae inner tegument protein family. In terms of assembly, interacts (via C-terminus) with the large tegument protein/LTP (via N-terminus).

It is found in the virion tegument. Its subcellular location is the host cytoplasm. It localises to the host nucleus. The protein resides in the host Golgi apparatus. The protein localises to the host trans-Golgi network. In terms of biological role, plays an essential role in cytoplasmic secondary envelopment during viral egress. Interacts with the capsid via the large tegument protein/LTP and participates in its transport to the host trans-Golgi network (TGN) where secondary envelopment occurs. Modulates tegumentation and capsid accumulation at the viral assembly complex. The chain is Inner tegument protein (UL47) from Homo sapiens (Human).